The sequence spans 779 residues: Ribonucleoside-diphosphate reductase large subunit (779 aa).

Residues S178, 193–194 (SC), G222, 420–424 (NLCIE), and 614–618 (PTATS) contribute to the substrate site. A disulfide bridge links C194 with C440. The active-site Proton acceptor is the N420. Residue C422 is the Cysteine radical intermediate of the active site. E424 functions as the Proton acceptor in the catalytic mechanism.

It belongs to the ribonucleoside diphosphate reductase large chain family. Heterotetramer composed of a homodimer of the large subunit (R1) and a homodimer of the small subunit (R2). Larger multisubunit protein complex are also active, composed of (R1)n(R2)n.

The catalysed reaction is a 2'-deoxyribonucleoside 5'-diphosphate + [thioredoxin]-disulfide + H2O = a ribonucleoside 5'-diphosphate + [thioredoxin]-dithiol. With respect to regulation, under complex allosteric control mediated by deoxynucleoside triphosphates and ATP binding. The type of nucleotide bound at the specificity site determines substrate preference. It seems probable that ATP makes the enzyme reduce CDP and UDP, dGTP favors ADP reduction and dTTP favors GDP reduction. Functionally, ribonucleoside-diphosphate reductase holoenzyme provides the precursors necessary for viral DNA synthesis. Allows virus growth in non-dividing cells. Catalyzes the biosynthesis of deoxyribonucleotides from the corresponding ribonucleotides. The sequence is that of Ribonucleoside-diphosphate reductase large subunit from Ornithodoros (relapsing fever ticks).